We begin with the raw amino-acid sequence, 385 residues long: m7GpppN-mRNA hydrolase (385 aa).

A Nudix hydrolase domain is found at 95–226 (MGVPTYGAII…KLGLAPNKFF (132 aa)). Residues 129 to 150 (GKVNKEEAPHDCAAREVFEETG) carry the Nudix box motif. Mn(2+) is bound by residues E144 and E148. Phosphoserine is present on residues S246, S247, S249, S276, and S284. The tract at residues 247–266 (SDSDNGFSSTGSTPAKPTVE) is disordered. Over residues 249–259 (SDNGFSSTGST) the composition is skewed to low complexity.

It belongs to the Nudix hydrolase family. DCP2 subfamily. As to quaternary structure, found in a mRNA decay complex with LSM1, LSM3, LSM4, EXOSC2, EXOSC4, EXOSC10, PARN, XRN1, CNOT6, UPF1, UPF2 and UPF3B. Forms a complex with DCP1A, EDC3, DDX6 and EDC4/HEDLS, within this complex directly interacts with EDC4/HEDLS. Interacts with DPC1B, UPF1, UPF2 and UPF3B. Associates with polysomes. Interacts (via N-terminus and C-terminus) with TRIM21 (via N-terminus and C-terminus). Interacts with LIMD1, WTIP and AJUBA. Interacts with DDX17 in an RNA-dependent manner. Interacts with ZC3HAV1. Interacts with APOBEC3G in an RNA-dependent manner. Interacts with ZFP36L1 (via N-terminus). Interacts with NBDY. The cofactor is Mn(2+). Mg(2+) serves as cofactor.

It localises to the cytoplasm. The protein resides in the P-body. It is found in the nucleus. The catalysed reaction is a 5'-end (N(7)-methyl 5'-triphosphoguanosine)-ribonucleoside in mRNA + H2O = N(7)-methyl-GDP + a 5'-end phospho-ribonucleoside in mRNA + 2 H(+). In terms of biological role, decapping metalloenzyme that catalyzes the cleavage of the cap structure on mRNAs. Removes the 7-methyl guanine cap structure from mRNA molecules, yielding a 5'-phosphorylated mRNA fragment and 7m-GDP. Necessary for the degradation of mRNAs, both in normal mRNA turnover and in nonsense-mediated mRNA decay. Plays a role in replication-dependent histone mRNA degradation. Has higher activity towards mRNAs that lack a poly(A) tail. Has no activity towards a cap structure lacking an RNA moiety. The presence of a N(6)-methyladenosine methylation at the second transcribed position of mRNAs (N(6),2'-O-dimethyladenosine cap; m6A(m)) provides resistance to DCP2-mediated decapping. Blocks autophagy in nutrient-rich conditions by repressing the expression of ATG-related genes through degradation of their transcripts. This Pongo abelii (Sumatran orangutan) protein is m7GpppN-mRNA hydrolase (DCP2).